We begin with the raw amino-acid sequence, 459 residues long: O-phospho-L-seryl-tRNA:Cys-tRNA synthase 1 (459 aa).

Pyridoxal 5'-phosphate is bound by residues 152 to 153 (AR), Asn257, and 280 to 282 (SGH). Lys283 is subject to N6-(pyridoxal phosphate)lysine.

Belongs to the SepCysS family. As to quaternary structure, homodimer. Interacts with SepRS. It depends on pyridoxal 5'-phosphate as a cofactor.

It catalyses the reaction O-phospho-L-seryl-tRNA(Cys) + hydrogen sulfide + H(+) = L-cysteinyl-tRNA(Cys) + phosphate. In terms of biological role, converts O-phospho-L-seryl-tRNA(Cys) (Sep-tRNA(Cys)) to L-cysteinyl-tRNA(Cys) (Cys-tRNA(Cys)). This Methanococcoides burtonii (strain DSM 6242 / NBRC 107633 / OCM 468 / ACE-M) protein is O-phospho-L-seryl-tRNA:Cys-tRNA synthase 1.